A 462-amino-acid polypeptide reads, in one-letter code: L-seryl-tRNA(Sec) selenium transferase (462 aa).

Position 293 is an N6-(pyridoxal phosphate)lysine (Lys293).

This sequence belongs to the SelA family. Pyridoxal 5'-phosphate serves as cofactor.

It localises to the cytoplasm. It carries out the reaction L-seryl-tRNA(Sec) + selenophosphate + H(+) = L-selenocysteinyl-tRNA(Sec) + phosphate. It participates in aminoacyl-tRNA biosynthesis; selenocysteinyl-tRNA(Sec) biosynthesis; selenocysteinyl-tRNA(Sec) from L-seryl-tRNA(Sec) (bacterial route): step 1/1. In terms of biological role, converts seryl-tRNA(Sec) to selenocysteinyl-tRNA(Sec) required for selenoprotein biosynthesis. This Clostridium botulinum (strain Langeland / NCTC 10281 / Type F) protein is L-seryl-tRNA(Sec) selenium transferase.